A 110-amino-acid polypeptide reads, in one-letter code: Large ribosomal subunit protein uL22 (110 aa).

The protein belongs to the universal ribosomal protein uL22 family. In terms of assembly, part of the 50S ribosomal subunit.

Its function is as follows. This protein binds specifically to 23S rRNA; its binding is stimulated by other ribosomal proteins, e.g. L4, L17, and L20. It is important during the early stages of 50S assembly. It makes multiple contacts with different domains of the 23S rRNA in the assembled 50S subunit and ribosome. Functionally, the globular domain of the protein is located near the polypeptide exit tunnel on the outside of the subunit, while an extended beta-hairpin is found that lines the wall of the exit tunnel in the center of the 70S ribosome. The chain is Large ribosomal subunit protein uL22 from Aliivibrio fischeri (strain MJ11) (Vibrio fischeri).